The chain runs to 308 residues: Ribose 1,5-bisphosphate isomerase (308 aa).

Residues 24 to 27 and arginine 67 contribute to the substrate site; that span reads RGAG. Cysteine 129 serves as the catalytic Proton acceptor. Catalysis depends on aspartate 198, which acts as the Proton donor. Substrate is bound by residues 208-209 and lysine 234; that span reads NK.

Belongs to the eIF-2B alpha/beta/delta subunits family. R15P isomerase subfamily.

The enzyme catalyses alpha-D-ribose 1,5-bisphosphate = D-ribulose 1,5-bisphosphate. In terms of biological role, catalyzes the isomerization of ribose 1,5-bisphosphate (R15P) to ribulose 1,5-bisphosphate (RuBP), the CO(2) acceptor and substrate for RubisCO. Functions in an archaeal AMP degradation pathway, together with AMP phosphorylase and RubisCO. This chain is Ribose 1,5-bisphosphate isomerase, found in Methanocaldococcus jannaschii (strain ATCC 43067 / DSM 2661 / JAL-1 / JCM 10045 / NBRC 100440) (Methanococcus jannaschii).